The chain runs to 30 residues: Putative cytochrome bd-II ubiquinol oxidase subunit AppX (30 aa).

The chain crosses the membrane as a helical span at residues 4-24 (LLWFVGILLMCSLSTLVLVWL).

Belongs to the cytochrome ubiquinol oxidase subunit X family. Able to interact with CydA and CydB upon overexpression.

It localises to the cell inner membrane. Its function is as follows. Might be part of cytochrome bd-II oxidase (appB and appC). Able to restore reductant resistance to a cydX deletion mutant upon overexpression. CydX and this protein may have some functional overlap. The polypeptide is Putative cytochrome bd-II ubiquinol oxidase subunit AppX (appX) (Escherichia coli (strain K12)).